Here is a 354-residue protein sequence, read N- to C-terminus: Protein RecA (354 aa).

67–74 (GPESSGKT) is an ATP binding site. The tract at residues 331–354 (NQDSTPDFSVDDNGEGVKETNEDF) is disordered. Residues 345-354 (EGVKETNEDF) show a composition bias toward basic and acidic residues.

It belongs to the RecA family.

Its subcellular location is the cytoplasm. Functionally, can catalyze the hydrolysis of ATP in the presence of single-stranded DNA, the ATP-dependent uptake of single-stranded DNA by duplex DNA, and the ATP-dependent hybridization of homologous single-stranded DNAs. It interacts with LexA causing its activation and leading to its autocatalytic cleavage. This is Protein RecA from Citrobacter koseri (strain ATCC BAA-895 / CDC 4225-83 / SGSC4696).